A 288-amino-acid chain; its full sequence is ATP synthase gamma chain (288 aa).

This sequence belongs to the ATPase gamma chain family. In terms of assembly, F-type ATPases have 2 components, CF(1) - the catalytic core - and CF(0) - the membrane proton channel. CF(1) has five subunits: alpha(3), beta(3), gamma(1), delta(1), epsilon(1). CF(0) has three main subunits: a, b and c.

The protein resides in the cell inner membrane. Its function is as follows. Produces ATP from ADP in the presence of a proton gradient across the membrane. The gamma chain is believed to be important in regulating ATPase activity and the flow of protons through the CF(0) complex. The chain is ATP synthase gamma chain from Blochmanniella pennsylvanica (strain BPEN).